A 252-amino-acid chain; its full sequence is Chitooligosaccharide deacetylase (252 aa).

2 residues coordinate Mg(2+): H61 and H125.

This sequence belongs to the YdjC deacetylase family. ChbG subfamily. In terms of assembly, homodimer. The cofactor is Mg(2+).

Its subcellular location is the cytoplasm. It carries out the reaction N,N'-diacetylchitobiose + H2O = N-acetyl-beta-D-glucosaminyl-(1-&gt;4)-D-glucosamine + acetate. The enzyme catalyses diacetylchitobiose-6'-phosphate + H2O = N'-monoacetylchitobiose-6'-phosphate + acetate. Its pathway is glycan degradation; chitin degradation. In terms of biological role, involved in the degradation of chitin. ChbG is essential for growth on the acetylated chitooligosaccharides chitobiose and chitotriose but is dispensable for growth on cellobiose and chitosan dimer, the deacetylated form of chitobiose. Deacetylation of chitobiose-6-P and chitotriose-6-P is necessary for both the activation of the chb promoter by the regulatory protein ChbR and the hydrolysis of phosphorylated beta-glucosides by the phospho-beta-glucosidase ChbF. Catalyzes the removal of only one acetyl group from chitobiose-6-P to yield monoacetylchitobiose-6-P, the inducer of ChbR and the substrate of ChbF. This is Chitooligosaccharide deacetylase from Escherichia coli O139:H28 (strain E24377A / ETEC).